Reading from the N-terminus, the 86-residue chain is Large ribosomal subunit protein uL24 (86 aa).

The protein belongs to the universal ribosomal protein uL24 family. As to quaternary structure, part of the 50S ribosomal subunit.

In terms of biological role, one of two assembly initiator proteins, it binds directly to the 5'-end of the 23S rRNA, where it nucleates assembly of the 50S subunit. Its function is as follows. One of the proteins that surrounds the polypeptide exit tunnel on the outside of the subunit. This is Large ribosomal subunit protein uL24 from Bdellovibrio bacteriovorus (strain ATCC 15356 / DSM 50701 / NCIMB 9529 / HD100).